Reading from the N-terminus, the 513-residue chain is Activin receptor type-2A (513 aa).

The N-terminal stretch at 1-19 (MGAAAKLAFAVFLISCSSG) is a signal peptide. Over 20 to 135 (AILGRSETQE…TSNPVTPKPP (116 aa)) the chain is Extracellular. Intrachain disulfides connect Cys30–Cys60, Cys50–Cys78, Cys85–Cys104, Cys91–Cys103, and Cys105–Cys110. 2 N-linked (GlcNAc...) asparagine glycosylation sites follow: Asn43 and Asn66. The helical transmembrane segment at 136 to 161 (YYNILLYSLVPLMLIAGIVICAFWVY) threads the bilayer. Over 162–513 (RHHKMAYPPV…VDFPPKESSL (352 aa)) the chain is Cytoplasmic. The region spanning 192-485 (LQLLEVKARG…GERITQMQRL (294 aa)) is the Protein kinase domain. ATP-binding positions include 198-206 (KARGRFGCV) and Lys219. The active-site Proton acceptor is the Asp322.

Belongs to the protein kinase superfamily. TKL Ser/Thr protein kinase family. TGFB receptor subfamily. As to quaternary structure, part of a complex consisting of MAGI2/ARIP1, ACVR2A, ACVR1B and SMAD3. Interacts with MAGI2/ARIP1. Interacts with type I receptor ACVR1. Interacts with BMP7. Interacts with TSC22D1/TSC-22. Interacts with activin A/INHBA. The cofactor is Mg(2+). Requires Mn(2+) as cofactor. In terms of tissue distribution, brain, testis, intestine, liver and kidney.

It localises to the cell membrane. The catalysed reaction is L-threonyl-[receptor-protein] + ATP = O-phospho-L-threonyl-[receptor-protein] + ADP + H(+). It catalyses the reaction L-seryl-[receptor-protein] + ATP = O-phospho-L-seryl-[receptor-protein] + ADP + H(+). In terms of biological role, on ligand binding, forms a receptor complex consisting of two type II and two type I transmembrane serine/threonine kinases. Type II receptors phosphorylate and activate type I receptors which autophosphorylate, then bind and activate SMAD transcriptional regulators. Receptor for activin A, activin B and inhibin A. Mediates induction of adipogenesis by GDF6. This Mus musculus (Mouse) protein is Activin receptor type-2A.